The sequence spans 541 residues: Zinc finger protein 513 (541 aa).

The interval 1–118 (MPRRKQSHPQ…GEARGERPGP (118 aa)) is disordered. Positions 44–55 (LEFEEEEEEDEG) are enriched in acidic residues. Ser85 and Ser96 each carry phosphoserine. Over residues 103 to 115 (EPARGPGEARGER) the composition is skewed to basic and acidic residues. 8 consecutive C2H2-type zinc fingers follow at residues 150 to 172 (YSCRLCAFVSHYSSHLKRHMQTH), 178 to 200 (FRCGRCPYASAQLVNLTRHTRTH), 206 to 228 (YRCPHCPFACSSLGNLRRHQRTH), 360 to 382 (FACSLCPFATHYPNHLARHMKTH), 388 to 410 (FRCARCPYASAHLDNLKRHQRVH), 416 to 438 (YKCPLCPYACGNLANLKRHGRIH), 444 to 466 (FRCSLCNYSCNQSMNLKRHMLRH), and 472 to 494 (FRCATCAYTTGHWDNYKRHQKVH). Residues 492-541 (KVHGHGGAGGPGLSAPEGWAPPHSPPSVLSTRGPAALGATGSRALHSDSP) are disordered.

It belongs to the krueppel C2H2-type zinc-finger protein family. In terms of assembly, binds DNA. Can associate with the proximal promoter regions of PAX6 and SP4, and their known targets including ARR3, RHO, OPN1MW2 and OPN1SW. Widely expressed. In the eye, expression is greatest in the retina and least in the lens and cornea.

It is found in the nucleus. Functionally, transcriptional regulator that plays a role in retinal development and maintenance. This chain is Zinc finger protein 513 (Znf513), found in Mus musculus (Mouse).